Reading from the N-terminus, the 461-residue chain is Deoxyguanosinetriphosphate triphosphohydrolase-like protein (461 aa).

The disordered stretch occupies residues 22–41; the sequence is ERFLPDPPREKDNRPPFRRD. Basic and acidic residues predominate over residues 24–41; the sequence is FLPDPPREKDNRPPFRRD. Residues 72-285 enclose the HD domain; the sequence is RLTHSLEVAQ…MELADDIAYG (214 aa).

Belongs to the dGTPase family. Type 2 subfamily.

This is Deoxyguanosinetriphosphate triphosphohydrolase-like protein from Haemophilus influenzae (strain PittGG).